The chain runs to 251 residues: Sugar fermentation stimulation protein homolog (251 aa).

This sequence belongs to the SfsA family.

This chain is Sugar fermentation stimulation protein homolog, found in Yersinia pseudotuberculosis serotype O:1b (strain IP 31758).